Here is a 202-residue protein sequence, read N- to C-terminus: Ribonuclease HII (202 aa).

Residues 11-200 (GLIAGVDEVG…VRKAIEEFNR (190 aa)) form the RNase H type-2 domain. Residues Asp17, Glu18, and Asp109 each contribute to the a divalent metal cation site.

The protein belongs to the RNase HII family. It depends on Mn(2+) as a cofactor. Mg(2+) is required as a cofactor.

It is found in the cytoplasm. The enzyme catalyses Endonucleolytic cleavage to 5'-phosphomonoester.. Endonuclease that specifically degrades the RNA of RNA-DNA hybrids. The polypeptide is Ribonuclease HII (Actinobacillus succinogenes (strain ATCC 55618 / DSM 22257 / CCUG 43843 / 130Z)).